The primary structure comprises 426 residues: Adenylosuccinate synthetase (426 aa).

GTP contacts are provided by residues 12–18 and 40–42; these read GDEGKGK and GHT. Asp13 (proton acceptor) is an active-site residue. Asp13 and Gly40 together coordinate Mg(2+). IMP contacts are provided by residues 13–16, 38–41, Thr131, Arg145, Gln226, Thr241, and Arg305; these read DEGK and NAGH. Residue His41 is the Proton donor of the active site. 301–307 lines the substrate pocket; it reads ATTGRKR. GTP is bound by residues Arg307, 333–335, and 415–417; these read KLD and SVG.

This sequence belongs to the adenylosuccinate synthetase family. Homodimer. Mg(2+) serves as cofactor.

It localises to the cytoplasm. The catalysed reaction is IMP + L-aspartate + GTP = N(6)-(1,2-dicarboxyethyl)-AMP + GDP + phosphate + 2 H(+). The protein operates within purine metabolism; AMP biosynthesis via de novo pathway; AMP from IMP: step 1/2. Its function is as follows. Plays an important role in the de novo pathway of purine nucleotide biosynthesis. Catalyzes the first committed step in the biosynthesis of AMP from IMP. This Nitratidesulfovibrio vulgaris (strain ATCC 29579 / DSM 644 / CCUG 34227 / NCIMB 8303 / VKM B-1760 / Hildenborough) (Desulfovibrio vulgaris) protein is Adenylosuccinate synthetase.